A 363-amino-acid polypeptide reads, in one-letter code: NAD(P)H-quinone oxidoreductase subunit 1, chloroplastic (363 aa).

6 helical membrane-spanning segments follow: residues 28–48, 98–118, 129–149, 253–273, 300–320, and 336–356; these read WVFV…LAIV, FSFG…VIPF, IGVF…LMSG, FGLF…FVTV, VFVT…FIFV, and LLNL…LLTT.

It belongs to the complex I subunit 1 family. NDH is composed of at least 16 different subunits, 5 of which are encoded in the nucleus.

It is found in the plastid. Its subcellular location is the chloroplast thylakoid membrane. The enzyme catalyses a plastoquinone + NADH + (n+1) H(+)(in) = a plastoquinol + NAD(+) + n H(+)(out). It catalyses the reaction a plastoquinone + NADPH + (n+1) H(+)(in) = a plastoquinol + NADP(+) + n H(+)(out). Its function is as follows. NDH shuttles electrons from NAD(P)H:plastoquinone, via FMN and iron-sulfur (Fe-S) centers, to quinones in the photosynthetic chain and possibly in a chloroplast respiratory chain. The immediate electron acceptor for the enzyme in this species is believed to be plastoquinone. Couples the redox reaction to proton translocation, and thus conserves the redox energy in a proton gradient. The sequence is that of NAD(P)H-quinone oxidoreductase subunit 1, chloroplastic from Phaseolus vulgaris (Kidney bean).